The primary structure comprises 41 residues: Large ribosomal subunit protein bL36 (41 aa).

This sequence belongs to the bacterial ribosomal protein bL36 family.

This Paracoccus denitrificans (strain Pd 1222) protein is Large ribosomal subunit protein bL36.